Reading from the N-terminus, the 160-residue chain is 3-hydroxyacyl-[acyl-carrier-protein] dehydratase FabZ (160 aa).

The active site involves H63.

The protein belongs to the thioester dehydratase family. FabZ subfamily.

The protein resides in the cytoplasm. It catalyses the reaction a (3R)-hydroxyacyl-[ACP] = a (2E)-enoyl-[ACP] + H2O. Its function is as follows. Involved in unsaturated fatty acids biosynthesis. Catalyzes the dehydration of short chain beta-hydroxyacyl-ACPs and long chain saturated and unsaturated beta-hydroxyacyl-ACPs. This chain is 3-hydroxyacyl-[acyl-carrier-protein] dehydratase FabZ, found in Xylella fastidiosa (strain 9a5c).